We begin with the raw amino-acid sequence, 1023 residues long: 2-oxoglutarate dehydrogenase complex component E1 (1023 aa).

The transit peptide at 1–40 (MFHLRTCAAKLRPLTASQTVKTFSQNRPAAARTFGQIRCY) directs the protein to the mitochondrion. Lys-74 is subject to N6-succinyllysine. The residue at position 100 (Ser-100) is a Phosphoserine. His-143, Asp-156, and Asp-158 together coordinate Ca(2+). Arg-312 lines the thiamine diphosphate pocket. Position 401 is an N6-acetyllysine (Lys-401). 3 residues coordinate thiamine diphosphate: Asp-411, Asn-444, and Ile-446. Residues Asp-411, Asn-444, and Ile-446 each coordinate Mg(2+). A Glycyl lysine isopeptide (Lys-Gly) (interchain with G-Cter in ubiquitin) cross-link involves residue Lys-534. Lys-564 is subject to N6-succinyllysine. Gln-676 lines the thiamine diphosphate pocket. At Lys-970 the chain carries N6-acetyllysine.

Belongs to the alpha-ketoglutarate dehydrogenase family. As to quaternary structure, homodimer. The 2-oxoglutarate dehydrogenase complex is composed of OGDH (2-oxoglutarate dehydrogenase; E1), DLST (dihydrolipoamide succinyltransferase; E2), DLD (dihydrolipoamide dehydrogenase; E3) and the assembly factor KGD4. It contains multiple copies of the three enzymatic components (E1, E2 and E3). In the nucleus, the 2-oxoglutarate dehydrogenase complex associates with KAT2A. Interacts with ABHD11; this interaction maintains the functional lipoylation of the 2-oxoglutarate dehydrogenase complex. It depends on thiamine diphosphate as a cofactor. The cofactor is Mg(2+).

The protein resides in the mitochondrion. It localises to the nucleus. The enzyme catalyses N(6)-[(R)-lipoyl]-L-lysyl-[protein] + 2-oxoglutarate + H(+) = N(6)-[(R)-S(8)-succinyldihydrolipoyl]-L-lysyl-[protein] + CO2. Its activity is regulated as follows. Calcium ions and ADP stimulate, whereas ATP and NADH reduce catalytic activity. Functionally, 2-oxoglutarate dehydrogenase (E1o) component of the 2-oxoglutarate dehydrogenase complex (OGDHC). Participates in the first step, rate limiting for the overall conversion of 2-oxoglutarate to succinyl-CoA and CO(2) catalyzed by the whole OGDHC. Catalyzes the irreversible decarboxylation of 2-oxoglutarate (alpha-ketoglutarate) via the thiamine diphosphate (ThDP) cofactor and subsequent transfer of the decarboxylated acyl intermediate on an oxidized dihydrolipoyl group that is covalently amidated to the E2 enzyme (dihydrolipoyllysine-residue succinyltransferase or DLST). Plays a key role in the Krebs (citric acid) cycle, which is a common pathway for oxidation of fuel molecules, including carbohydrates, fatty acids, and amino acids. Can catalyze the decarboxylation of 2-oxoadipate in vitro, but at a much lower rate than 2-oxoglutarate. Mainly active in the mitochondrion. A fraction of the 2-oxoglutarate dehydrogenase complex also localizes in the nucleus and is required for lysine succinylation of histones: associates with KAT2A on chromatin and provides succinyl-CoA to histone succinyltransferase KAT2A. The polypeptide is 2-oxoglutarate dehydrogenase complex component E1 (Bos taurus (Bovine)).